Here is a 472-residue protein sequence, read N- to C-terminus: Interferon-induced protein with tetratricopeptide repeats 2 (472 aa).

At Ser-2 the chain carries N-acetylserine. TPR repeat units follow at residues 51–89, 90–135, 136–171, 172–208, 244–277, 278–333, 334–364, 365–403, and 404–445; these read ATMC…PDQV, EIRS…RIEN, PALD…DPKN, PEFT…SPDN, IDTL…LPNN, AYVH…MLEY, SCSF…KDLP, PGPK…KKKT, and IPQK…GGQQ. The segment at 441 to 472 is disordered; sequence GGGQQADKDSERGVDSANQVPSASLDEDGAEY.

Belongs to the IFIT family. In terms of assembly, domain-swapped homodimer. Component of an interferon-dependent multiprotein complex, at least composed of IFIT1, IFIT2 and IFIT3. Interacts with IFIT1 and IFIT3. Interacts with STING1/MITA and disrupts its interaction with MAVS or TBK1. Interacts with EIF3C.

The protein resides in the cytoplasm. The protein localises to the endoplasmic reticulum. IFN-induced antiviral protein which inhibits expression of viral messenger RNAs lacking 2'-O-methylation of the 5' cap. The ribose 2'-O-methylation would provide a molecular signature to distinguish between self and non-self mRNAs by the host during viral infection. Viruses evolved several ways to evade this restriction system such as encoding their own 2'-O-methylase for their mRNAs or by stealing host cap containing the 2'-O-methylation (cap snatching mechanism). Binds AU-rich viral RNAs, with or without 5' triphosphorylation, RNA-binding is required for antiviral activity. Can promote apoptosis. This chain is Interferon-induced protein with tetratricopeptide repeats 2 (Ifit2), found in Mus musculus (Mouse).